The primary structure comprises 523 residues: ATP synthase subunit alpha (523 aa).

Residue 173–180 (GDRQTGKT) coordinates ATP.

This sequence belongs to the ATPase alpha/beta chains family. F-type ATPases have 2 components, CF(1) - the catalytic core - and CF(0) - the membrane proton channel. CF(1) has five subunits: alpha(3), beta(3), gamma(1), delta(1), epsilon(1). CF(0) has three main subunits: a(1), b(2) and c(9-12). The alpha and beta chains form an alternating ring which encloses part of the gamma chain. CF(1) is attached to CF(0) by a central stalk formed by the gamma and epsilon chains, while a peripheral stalk is formed by the delta and b chains.

It localises to the cell membrane. The enzyme catalyses ATP + H2O + 4 H(+)(in) = ADP + phosphate + 5 H(+)(out). Produces ATP from ADP in the presence of a proton gradient across the membrane. The alpha chain is a regulatory subunit. This is ATP synthase subunit alpha from Streptomyces griseus subsp. griseus (strain JCM 4626 / CBS 651.72 / NBRC 13350 / KCC S-0626 / ISP 5235).